Consider the following 224-residue polypeptide: N-terminal Xaa-Pro-Lys N-methyltransferase 1 (224 aa).

S-adenosyl-L-methionine-binding positions include glycine 70, arginine 75, aspartate 92–threonine 94, leucine 120–glutamine 121, and glutamine 136.

Belongs to the methyltransferase superfamily. NTM1 family.

The protein resides in the nucleus. It carries out the reaction N-terminal L-alanyl-L-prolyl-L-lysyl-[protein] + 3 S-adenosyl-L-methionine = N-terminal N,N,N-trimethyl-L-alanyl-L-prolyl-L-lysyl-[protein] + 3 S-adenosyl-L-homocysteine + 3 H(+). The enzyme catalyses N-terminal L-seryl-L-prolyl-L-lysyl-[protein] + 3 S-adenosyl-L-methionine = N-terminal N,N,N-trimethyl-L-seryl-L-prolyl-L-lysyl-[protein] + 3 S-adenosyl-L-homocysteine + 3 H(+). It catalyses the reaction N-terminal L-prolyl-L-prolyl-L-lysyl-[protein] + 2 S-adenosyl-L-methionine = N-terminal N,N-dimethyl-L-prolyl-L-prolyl-L-lysyl-[protein] + 2 S-adenosyl-L-homocysteine + 2 H(+). In terms of biological role, distributive alpha-N-methyltransferase that methylates the N-terminus of target proteins containing the N-terminal motif [Ala/Gly/Pro/Ser]-Pro-Lys when the initiator Met is cleaved. Specifically catalyzes mono-, di- or tri-methylation of the exposed alpha-amino group of the Ala, Gly or Ser residue in the [Ala/Gly/Ser]-Pro-Lys motif and mono- or di-methylation of Pro in the Pro-Pro-Lys motif. Required during mitosis for normal bipolar spindle formation and chromosome segregation via its action on target proteins. The sequence is that of N-terminal Xaa-Pro-Lys N-methyltransferase 1 (ntmt1) from Xenopus tropicalis (Western clawed frog).